Here is a 495-residue protein sequence, read N- to C-terminus: Probable aminotransferase ACS12 (495 aa).

Residue Lys-334 is modified to N6-(pyridoxal phosphate)lysine.

This sequence belongs to the class-I pyridoxal-phosphate-dependent aminotransferase family. Homodimer. Pyridoxal 5'-phosphate is required as a cofactor. Expressed in roots. Expressed at low level in leaves, stems, flowers and siliques.

Functionally, probable aminotransferase. Does not have 1-aminocyclopropane-1-carboxylate synthase (ACS) activity, suggesting that it is not involved in ethylene biosynthesis. In Arabidopsis thaliana (Mouse-ear cress), this protein is Probable aminotransferase ACS12 (ACS12).